The primary structure comprises 237 residues: Insulin-like growth factor-binding protein 6 (237 aa).

An N-terminal signal peptide occupies residues 1 to 25; the sequence is MTPHRLLPPLLLTLLLAARPGGALA. One can recognise an IGFBP N-terminal domain in the interval 26–105; the sequence is RCPGCGQGVS…LQGRGRCGRA (80 aa). 5 cysteine pairs are disulfide-bonded: cysteine 27-cysteine 30, cysteine 38-cysteine 42, cysteine 55-cysteine 61, cysteine 69-cysteine 82, and cysteine 76-cysteine 102. Positions 101–158 are disordered; it reads RCGRARTPSGENPKESKPQAGTARSQDVNRRDQQRNSGTSTTPSRSNSGGVQDTEMGP. Polar residues predominate over residues 135–151; sequence RNSGTSTTPSRSNSGGV. Positions 156–231 constitute a Thyroglobulin type-1 domain; that stretch reads MGPCRKHLDS…SEGGDGSSLC (76 aa). Disulfide bonds link cysteine 159–cysteine 186, cysteine 197–cysteine 208, and cysteine 210–cysteine 231. Residues 215–237 form a disordered region; it reads GQPLPGSSEGGDGSSLCPTGSSG.

Interacts (via C-terminal domain) with PHB2. O-glycosylated.

The protein localises to the secreted. Functionally, IGF-binding proteins prolong the half-life of the IGFs and have been shown to either inhibit or stimulate the growth promoting effects of the IGFs on cell culture. They alter the interaction of IGFs with their cell surface receptors. Activates the MAPK signaling pathway and induces cell migration. The polypeptide is Insulin-like growth factor-binding protein 6 (IGFBP6) (Bos taurus (Bovine)).